The chain runs to 148 residues: UPF0178 protein Mlg_1612 (148 aa).

The protein belongs to the UPF0178 family.

The polypeptide is UPF0178 protein Mlg_1612 (Alkalilimnicola ehrlichii (strain ATCC BAA-1101 / DSM 17681 / MLHE-1)).